Here is a 74-residue protein sequence, read N- to C-terminus: Conotoxin VxVIA (74 aa).

An N-terminal signal peptide occupies residues 1–22; that stretch reads MKLTCVLIIAVLFLTAYQLATA. Positions 23–47 are excised as a propeptide; it reads ASHAKGKQKHRALRPADKHFRFTKR. Cystine bridges form between Cys48-Cys62, Cys55-Cys66, and Cys61-Cys73.

In terms of tissue distribution, expressed by the venom duct.

It localises to the secreted. Functionally, when injected intracranially in mice, induces a series of symptoms such as quivering, climbing, scratching, barrel rolling and paralysis of limbs. Unexpectedly, no effect is observed on ionic currents when tested on locust DUM neuron. The chain is Conotoxin VxVIA from Conus vexillum (Flag cone).